Consider the following 371-residue polypeptide: Protein RecA (371 aa).

75-82 (GPESSGKT) contributes to the ATP binding site. The interval 343–371 (KAKDEPIADEDQPIDVVPNFDDQDVEPQN) is disordered.

The protein belongs to the RecA family.

It localises to the cytoplasm. Functionally, can catalyze the hydrolysis of ATP in the presence of single-stranded DNA, the ATP-dependent uptake of single-stranded DNA by duplex DNA, and the ATP-dependent hybridization of homologous single-stranded DNAs. It interacts with LexA causing its activation and leading to its autocatalytic cleavage. This is Protein RecA from Corynebacterium urealyticum (strain ATCC 43042 / DSM 7109).